Consider the following 285-residue polypeptide: Bis(5'-nucleosyl)-tetraphosphatase, symmetrical (285 aa).

This sequence belongs to the Ap4A hydrolase family.

It carries out the reaction P(1),P(4)-bis(5'-adenosyl) tetraphosphate + H2O = 2 ADP + 2 H(+). Functionally, hydrolyzes diadenosine 5',5'''-P1,P4-tetraphosphate to yield ADP. The protein is Bis(5'-nucleosyl)-tetraphosphatase, symmetrical of Pseudomonas entomophila (strain L48).